A 281-amino-acid chain; its full sequence is MQTALASRGRVGLVPTMGFLHEGHATLIRRARAECDVVVVSIFVNPMQFGPTEDLATYPRDLDRDLALAGAAGADFVFHPEAAAMYPAGFSTRVEVSGVSEPLDGAARPGHFAGVATVVLKLLNIVQPERAYFGEKDWQQLAVVRRLVADLNLRSEIVGVPTVRADEEAAHAGLALSSRNSYLSPEQQRRATVLSRALRAVQAAYAGGERDTGRLRQAGLDVLASEPELALDYLVVVGPDLRDVPQLSDDPLNRVLIAGRLFGVRLIDNMPLSTAPVPAPA.

17 to 24 contributes to the ATP binding site; it reads MGFLHEGH. The Proton donor role is filled by His24. Gln48 serves as a coordination point for (R)-pantoate. Gln48 contacts beta-alanine. 134–137 is a binding site for ATP; the sequence is GEKD. Gln140 provides a ligand contact to (R)-pantoate. ATP contacts are provided by residues Val163 and 176 to 179; that span reads LSSR.

Belongs to the pantothenate synthetase family. Homodimer.

The protein localises to the cytoplasm. It carries out the reaction (R)-pantoate + beta-alanine + ATP = (R)-pantothenate + AMP + diphosphate + H(+). The protein operates within cofactor biosynthesis; (R)-pantothenate biosynthesis; (R)-pantothenate from (R)-pantoate and beta-alanine: step 1/1. Catalyzes the condensation of pantoate with beta-alanine in an ATP-dependent reaction via a pantoyl-adenylate intermediate. The protein is Pantothenate synthetase of Deinococcus radiodurans (strain ATCC 13939 / DSM 20539 / JCM 16871 / CCUG 27074 / LMG 4051 / NBRC 15346 / NCIMB 9279 / VKM B-1422 / R1).